We begin with the raw amino-acid sequence, 319 residues long: Protein MGF 360-8L (319 aa).

Belongs to the asfivirus MGF 360 family.

In terms of biological role, plays a role in virus cell tropism, and may be required for efficient virus replication in macrophages. The protein is Protein MGF 360-8L of Ornithodoros (relapsing fever ticks).